A 121-amino-acid chain; its full sequence is Ribosome-binding factor A (121 aa).

Belongs to the RbfA family. In terms of assembly, monomer. Binds 30S ribosomal subunits, but not 50S ribosomal subunits or 70S ribosomes.

The protein resides in the cytoplasm. Functionally, one of several proteins that assist in the late maturation steps of the functional core of the 30S ribosomal subunit. Associates with free 30S ribosomal subunits (but not with 30S subunits that are part of 70S ribosomes or polysomes). Required for efficient processing of 16S rRNA. May interact with the 5'-terminal helix region of 16S rRNA. This is Ribosome-binding factor A from Lactobacillus helveticus (strain DPC 4571).